The sequence spans 793 residues: Neurobeachin (793 aa).

Disordered stretches follow at residues 68–92 (ENIK…TGAK) and 685–793 (RETA…EILK). Composition is skewed to polar residues over residues 77–90 (NVST…QTTG), 689–710 (RSGS…STET), 750–762 (NILN…TSTG), and 782–793 (ESLTESPSEILK).

This sequence belongs to the WD repeat neurobeachin family. As to quaternary structure, interacts with RII subunit of PKA. As to expression, forebrain and cerebellum.

The protein resides in the cytoplasm. Its subcellular location is the membrane. Functionally, binds to type II regulatory subunits of protein kinase A and anchors/targets them to the membrane. May anchor the kinase to cytoskeletal and/or organelle-associated proteins. This chain is Neurobeachin (NBEA), found in Gallus gallus (Chicken).